We begin with the raw amino-acid sequence, 116 residues long: CDKN2AIP N-terminal-like protein (116 aa).

The residue at position 1 (Met1) is an N-acetylmethionine. Residues 24–116 (AEQFRSYSES…RSELMKKHQS (93 aa)) form the XRN2-binding (XTBD) domain.

This sequence belongs to the CARF family. Interacts with XRN2; the interaction is direct.

The chain is CDKN2AIP N-terminal-like protein (Cdkn2aipnl) from Rattus norvegicus (Rat).